Reading from the N-terminus, the 21-residue chain is MVKQIEFKYAFQEALNSAGDK.

Lys3 carries the N6-acetyllysine modification. Lys8 is modified (N6-succinyllysine).

It belongs to the thioredoxin family. Homodimer; disulfide-linked. Interacts with TXNIP through the redox-active site. Interacts with MAP3K5 and CASP3. Interacts with APEX1; the interaction stimulates the FOS/JUN AP-1 DNA-binding activity in a redox-dependent manner.

Its subcellular location is the nucleus. The protein resides in the cytoplasm. It localises to the secreted. In terms of biological role, participates in various redox reactions through the reversible oxidation of its active center dithiol to a disulfide and catalyzes dithiol-disulfide exchange reactions. Plays a role in the reversible S-nitrosylation of cysteine residues in target proteins, and thereby contributes to the response to intracellular nitric oxide. Nitrosylates the active site Cys of CASP3 in response to nitric oxide (NO), and thereby inhibits caspase-3 activity. Induces the FOS/JUN AP-1 DNA binding activity in ionizing radiation (IR) cells through its oxidation/reduction status and stimulates AP-1 transcriptional activity. The protein is Thioredoxin (TXN) of Canis lupus familiaris (Dog).